Reading from the N-terminus, the 510-residue chain is NAD(P)H-quinone oxidoreductase subunit 2 B, chloroplastic (510 aa).

Helical transmembrane passes span 24–44, 59–79, 99–119, 124–144, 149–169, 184–204, 229–249, 262–284, 295–315, 323–343, 354–374, 395–415, and 418–438; these read LLLF…GLIL, WFYF…LFRW, IFQF…VEYI, MAIT…MFLC, LITI…LSGY, LLMG…LYGL, ISIA…LAPF, TPVV…TRIF, WHLL…LIAI, MLAY…IVGD, YMLF…LFGL, ALSL…AGFF, and LHLF…IGLL.

This sequence belongs to the complex I subunit 2 family. As to quaternary structure, NDH is composed of at least 16 different subunits, 5 of which are encoded in the nucleus.

It localises to the plastid. The protein localises to the chloroplast thylakoid membrane. It carries out the reaction a plastoquinone + NADH + (n+1) H(+)(in) = a plastoquinol + NAD(+) + n H(+)(out). It catalyses the reaction a plastoquinone + NADPH + (n+1) H(+)(in) = a plastoquinol + NADP(+) + n H(+)(out). Its function is as follows. NDH shuttles electrons from NAD(P)H:plastoquinone, via FMN and iron-sulfur (Fe-S) centers, to quinones in the photosynthetic chain and possibly in a chloroplast respiratory chain. The immediate electron acceptor for the enzyme in this species is believed to be plastoquinone. Couples the redox reaction to proton translocation, and thus conserves the redox energy in a proton gradient. In Lemna minor (Common duckweed), this protein is NAD(P)H-quinone oxidoreductase subunit 2 B, chloroplastic.